The following is a 202-amino-acid chain: Probable nicotinate-nucleotide adenylyltransferase (202 aa).

This sequence belongs to the NadD family.

The enzyme catalyses nicotinate beta-D-ribonucleotide + ATP + H(+) = deamido-NAD(+) + diphosphate. Its pathway is cofactor biosynthesis; NAD(+) biosynthesis; deamido-NAD(+) from nicotinate D-ribonucleotide: step 1/1. Its function is as follows. Catalyzes the reversible adenylation of nicotinate mononucleotide (NaMN) to nicotinic acid adenine dinucleotide (NaAD). The polypeptide is Probable nicotinate-nucleotide adenylyltransferase (Bacteroides thetaiotaomicron (strain ATCC 29148 / DSM 2079 / JCM 5827 / CCUG 10774 / NCTC 10582 / VPI-5482 / E50)).